Here is a 283-residue protein sequence, read N- to C-terminus: MPELPEVETVRRGLEPAMAGRLISEARVNRPDLRWPLPPRMAERLTGQRVLRLRRRSKYILADLSGGESLLIHLGMSGRMLVSGARVGDFVHDHPAPARHDHVVLEMEGGARVTFNDARRFGAMDLVPTEAAETHPLLASLGPEPLGNAFDGAYLAARLTGRRTPVKAALLDQRIVAGLGNIYVCEVLFRAGLAPVRLAGSLGEARAAGLVPIIREVLSEAIEAGGSSLRDYRQADGELGYFQHTFRVYGREGQPCVTPGCRGLVGRIVQSGRSSFHCPECQR.

Pro-2 (schiff-base intermediate with DNA) is an active-site residue. Glu-3 acts as the Proton donor in catalysis. The Proton donor; for beta-elimination activity role is filled by Lys-58. Residues His-100, Arg-119, and Arg-162 each coordinate DNA. The FPG-type zinc-finger motif lies at 247-283 (RVYGREGQPCVTPGCRGLVGRIVQSGRSSFHCPECQR). Arg-273 functions as the Proton donor; for delta-elimination activity in the catalytic mechanism.

Belongs to the FPG family. As to quaternary structure, monomer. The cofactor is Zn(2+).

It catalyses the reaction Hydrolysis of DNA containing ring-opened 7-methylguanine residues, releasing 2,6-diamino-4-hydroxy-5-(N-methyl)formamidopyrimidine.. The catalysed reaction is 2'-deoxyribonucleotide-(2'-deoxyribose 5'-phosphate)-2'-deoxyribonucleotide-DNA = a 3'-end 2'-deoxyribonucleotide-(2,3-dehydro-2,3-deoxyribose 5'-phosphate)-DNA + a 5'-end 5'-phospho-2'-deoxyribonucleoside-DNA + H(+). Functionally, involved in base excision repair of DNA damaged by oxidation or by mutagenic agents. Acts as a DNA glycosylase that recognizes and removes damaged bases. Has a preference for oxidized purines, such as 7,8-dihydro-8-oxoguanine (8-oxoG). Has AP (apurinic/apyrimidinic) lyase activity and introduces nicks in the DNA strand. Cleaves the DNA backbone by beta-delta elimination to generate a single-strand break at the site of the removed base with both 3'- and 5'-phosphates. The sequence is that of Formamidopyrimidine-DNA glycosylase from Cereibacter sphaeroides (strain ATCC 17025 / ATH 2.4.3) (Rhodobacter sphaeroides).